Reading from the N-terminus, the 373-residue chain is P2Y purinoceptor 1 (373 aa).

The Extracellular portion of the chain corresponds to M1 to F51. N-linked (GlcNAc...) asparagine glycans are attached at residues N11 and N27. 2 cysteine pairs are disulfide-bonded: C42–C296 and C124–C202. K46 is a binding site for ADP. Residues Y52–W74 traverse the membrane as a helical segment. Residues M75–S87 lie on the Cytoplasmic side of the membrane. The helical transmembrane segment at V88–F109 threads the bilayer. Topologically, residues Y110–K125 are extracellular. The N-linked (GlcNAc...) asparagine glycan is linked to N113. The chain crosses the membrane as a helical span at residues L126–A147. The Cytoplasmic portion of the chain corresponds to H148–K166. The helical transmembrane segment at N167–F188 threads the bilayer. At Y189–Y214 the chain is on the extracellular side. A glycan (N-linked (GlcNAc...) asparagine) is linked at N197. Y203–T205 provides a ligand contact to ADP. A helical membrane pass occupies residues F215–Y237. Residues G238–Y260 are Cytoplasmic-facing. The chain crosses the membrane as a helical span at residues L261–L284. Residues N283 to R287, Y303 to Y306, and R310 each bind ADP. Topologically, residues R285–Y303 are extracellular. A helical transmembrane segment spans residues A304–F325. Residues L326–L373 lie on the Cytoplasmic side of the membrane.

This sequence belongs to the G-protein coupled receptor 1 family.

It is found in the cell membrane. Functionally, receptor for extracellular adenine nucleotides such as ADP. In platelets, binding to ADP leads to mobilization of intracellular calcium ions via activation of phospholipase C, a change in platelet shape, and ultimately platelet aggregation. The protein is P2Y purinoceptor 1 (P2RY1) of Cavia porcellus (Guinea pig).